Reading from the N-terminus, the 505-residue chain is Maturase K (505 aa).

The protein belongs to the intron maturase 2 family. MatK subfamily.

It is found in the plastid. The protein resides in the chloroplast. In terms of biological role, usually encoded in the trnK tRNA gene intron. Probably assists in splicing its own and other chloroplast group II introns. The chain is Maturase K from Gomphrena haageana (Haage's globe-amaranth).